The following is a 509-amino-acid chain: Glycerol kinase (509 aa).

Thr-17 contacts ADP. 3 residues coordinate ATP: Thr-17, Thr-18, and Ser-19. Residue Thr-17 participates in sn-glycerol 3-phosphate binding. Arg-21 lines the ADP pocket. Arg-87, Glu-88, Tyr-139, and Asp-256 together coordinate sn-glycerol 3-phosphate. Glycerol is bound by residues Arg-87, Glu-88, Tyr-139, Asp-256, and Gln-257. ADP is bound by residues Thr-278 and Gly-322. Residues Thr-278, Gly-322, Gln-326, and Ala-423 each coordinate ATP. Ala-423 and Asn-427 together coordinate ADP.

The protein belongs to the FGGY kinase family.

It catalyses the reaction glycerol + ATP = sn-glycerol 3-phosphate + ADP + H(+). It participates in polyol metabolism; glycerol degradation via glycerol kinase pathway; sn-glycerol 3-phosphate from glycerol: step 1/1. Inhibited by fructose 1,6-bisphosphate (FBP). Functionally, key enzyme in the regulation of glycerol uptake and metabolism. Catalyzes the phosphorylation of glycerol to yield sn-glycerol 3-phosphate. This is Glycerol kinase from Corynebacterium glutamicum (strain R).